A 167-amino-acid polypeptide reads, in one-letter code: MPGNSPHYGRWPQHDFPPFKKLRPQSVTSRIQPGSDVIVCAEMDEQWGYVGAKSRQRWLFYAYDRLRKTVVAHVFGERTMATLGRLMSLLSPFDVVIWMTDGWPLYESRLKGKLHVISKRYTQRIERYNLNLRQHLARLGRKSLSFSKSVELHDKVIGHYLNIKHYQ.

It belongs to the transposase 27 family.

Absolutely required for transposition of IS1. This chain is Insertion element IS1 4 protein InsB (insB4), found in Escherichia coli (strain K12).